A 129-amino-acid chain; its full sequence is uncharacterized protein (129 aa).

This is an uncharacterized protein from Lepidoptera (butterflies and moths).